The sequence spans 279 residues: Thiazole synthase (279 aa).

Residue lysine 116 is the Schiff-base intermediate with DXP of the active site. Residues glycine 177, 203-204, and 225-226 contribute to the 1-deoxy-D-xylulose 5-phosphate site; these read AG and NS.

This sequence belongs to the ThiG family. Homotetramer. Forms heterodimers with either ThiH or ThiS.

The protein resides in the cytoplasm. The enzyme catalyses [ThiS sulfur-carrier protein]-C-terminal-Gly-aminoethanethioate + 2-iminoacetate + 1-deoxy-D-xylulose 5-phosphate = [ThiS sulfur-carrier protein]-C-terminal Gly-Gly + 2-[(2R,5Z)-2-carboxy-4-methylthiazol-5(2H)-ylidene]ethyl phosphate + 2 H2O + H(+). The protein operates within cofactor biosynthesis; thiamine diphosphate biosynthesis. Functionally, catalyzes the rearrangement of 1-deoxy-D-xylulose 5-phosphate (DXP) to produce the thiazole phosphate moiety of thiamine. Sulfur is provided by the thiocarboxylate moiety of the carrier protein ThiS. In vitro, sulfur can be provided by H(2)S. The protein is Thiazole synthase of Trichodesmium erythraeum (strain IMS101).